We begin with the raw amino-acid sequence, 246 residues long: Polyhedrin (246 aa).

Belongs to the polyhedrin family.

Major component of the virus occlusion bodies, which are large proteinaceous structures (polyhedra), that protect the virus from the outside environment for extended periods until they are ingested by insect larvae. The polypeptide is Polyhedrin (PH) (Lepidoptera (butterflies and moths)).